Reading from the N-terminus, the 436-residue chain is Platelet-activating factor acetylhydrolase (436 aa).

A signal peptide spans 1 to 21; the sequence is MAPPKLHTLFCLSGFLALVHP. 2 N-linked (GlcNAc...) asparagine glycosylation sites follow: asparagine 76 and asparagine 200. Serine 271 acts as the Nucleophile in catalysis. The active-site Charge relay system is aspartate 294. A glycan (N-linked (GlcNAc...) asparagine) is linked at asparagine 324. The Charge relay system role is filled by histidine 349.

This sequence belongs to the AB hydrolase superfamily. Lipase family. N-glycosylated. Plasma.

The protein localises to the secreted. It is found in the extracellular space. The enzyme catalyses a 1-O-alkyl-2-acetyl-sn-glycero-3-phosphocholine + H2O = a 1-O-alkyl-sn-glycero-3-phosphocholine + acetate + H(+). The catalysed reaction is 1-O-decyl-2-acetyl-sn-glycero-3-phosphocholine + H2O = 1-O-decyl-sn-glycero-3-phosphocholine + acetate + H(+). It catalyses the reaction 1-O-dodecyl-2-acetyl-sn-glycero-3-phosphocholine + H2O = 1-O-dodecyl-sn-glycero-3-phosphocholine + acetate + H(+). It carries out the reaction 1-O-tetradecyl-2-acetyl-sn-glycero-3-phosphocholine + H2O = 1-O-tetradecyl-sn-glycero-3-phosphocholine + acetate + H(+). The enzyme catalyses 1-O-hexadecyl-2-acetyl-sn-glycero-3-phosphocholine + H2O = 1-O-hexadecyl-sn-glycero-3-phosphocholine + acetate + H(+). The catalysed reaction is 1-O-octadecyl-2-acetyl-sn-glycero-3-phosphocholine + H2O = 1-O-octadecyl-sn-glycero-3-phosphocholine + acetate + H(+). It catalyses the reaction 1-hexadecanoyl-2-acetyl-sn-glycero-3-phosphocholine + H2O = 1-hexadecanoyl-sn-glycero-3-phosphocholine + acetate + H(+). It carries out the reaction 1-hexadecanoyl-2-propionyl-sn-glycero-3-phosphocholine + H2O = propanoate + 1-hexadecanoyl-sn-glycero-3-phosphocholine + H(+). The enzyme catalyses 1-hexadecanoyl-2-butanoyl-sn-glycero-3-phosphocholine + H2O = butanoate + 1-hexadecanoyl-sn-glycero-3-phosphocholine + H(+). The catalysed reaction is 1-hexadecanoyl-2-pentanoyl-sn-glycero-3-phosphocholine + H2O = pentanoate + 1-hexadecanoyl-sn-glycero-3-phosphocholine + H(+). It catalyses the reaction 1-hexadecanoyl-2-glutaroyl-sn-glycero-3-phosphocholine + H2O = glutarate + 1-hexadecanoyl-sn-glycero-3-phosphocholine + H(+). It carries out the reaction 1-hexadecanoyl-2-(5-oxopentanoyl)-sn-glycero-3-phosphocholine + H2O = 5-oxopentanoate + 1-hexadecanoyl-sn-glycero-3-phosphocholine + H(+). The enzyme catalyses 1-hexadecanoyl-2-(9-oxononanoyl)-sn-glycero-3-phosphocholine + H2O = 9-oxononanoate + 1-hexadecanoyl-sn-glycero-3-phosphocholine + H(+). The catalysed reaction is 1-hexadecanoyl-2-[9-hydroperoxy-(10E-octadecenoyl)]-sn-glycero-3-phosphocholine + H2O = 9-hydroperoxy-10E-octadecenoate + 1-hexadecanoyl-sn-glycero-3-phosphocholine + H(+). It catalyses the reaction 1-hexadecanoyl-2-(10-hydroperoxy-8E-octadecenoyl)-sn-glycero-3-phosphocholine + H2O = 10-hydroperoxy-(8E)-octadecenoate + 1-hexadecanoyl-sn-glycero-3-phosphocholine + H(+). In terms of biological role, lipoprotein-associated calcium-independent phospholipase A2 involved in phospholipid catabolism during inflammatory and oxidative stress response. At the lipid-aqueous interface, hydrolyzes the ester bond of fatty acyl group attached at sn-2 position of phospholipids (phospholipase A2 activity). Specifically targets phospholipids with a short-chain fatty acyl group at sn-2 position. Can hydrolyze phospholipids with long fatty acyl chains, only if they carry oxidized functional groups. Hydrolyzes and inactivates platelet-activating factor (PAF, 1-O-alkyl-2-acetyl-sn-glycero-3-phosphocholine), a potent pro-inflammatory signaling lipid that acts through PTAFR on various innate immune cells. Hydrolyzes oxidatively truncated phospholipids carrying an aldehyde group at omega position, preventing their accumulation in lipoprotein particles and uncontrolled pro-inflammatory effects. As part of high-density lipoprotein (HDL) particles, can hydrolyze phospholipids having long-chain fatty acyl hydroperoxides at sn-2 position and protect against potential accumulation of these oxylipins in the vascular wall. Catalyzes the release from membrane phospholipids of F2-isoprostanes, lipid biomarkers of cellular oxidative damage. This chain is Platelet-activating factor acetylhydrolase (PLA2G7), found in Cavia porcellus (Guinea pig).